We begin with the raw amino-acid sequence, 1193 residues long: Laminin subunit gamma-2 (1193 aa).

The first 21 residues, 1 to 21 (MPALWLGCCLCFSLLLPAARA), serve as a signal peptide directing secretion. Disulfide bonds link cysteine 28/cysteine 37, cysteine 30/cysteine 53, cysteine 56/cysteine 65, cysteine 68/cysteine 81, cysteine 84/cysteine 96, cysteine 86/cysteine 102, cysteine 104/cysteine 113, cysteine 116/cysteine 128, cysteine 139/cysteine 150, cysteine 141/cysteine 155, cysteine 157/cysteine 166, and cysteine 169/cysteine 184. Laminin EGF-like domains are found at residues 28–83 (CDCN…RCLP), 84–130 (CNCN…GCTQ), and 139–186 (CDCD…GCTQ). Residues 187-196 (CFCYGHSASC) enclose the Laminin EGF-like 4; first part domain. The Laminin IV type A domain maps to 213 to 381 (QDVDGWKAVQ…SGAPAPWVEQ (169 aa)). N-linked (GlcNAc...) asparagine glycans are attached at residues asparagine 342 and asparagine 362. In terms of domain architecture, Laminin EGF-like 4; second part spans 382–415 (CICPVGYKGQFCQDCASGYKRDSARLGPFGTCIP). Laminin EGF-like domains follow at residues 416 to 461 (CNCQ…SCKP), 462 to 516 (CPCH…PCQP), and 517 to 572 (CQCN…KCRA). Cystine bridges form between cysteine 462/cysteine 470, cysteine 464/cysteine 481, cysteine 484/cysteine 493, cysteine 496/cysteine 514, cysteine 517/cysteine 531, cysteine 519/cysteine 538, cysteine 541/cysteine 550, cysteine 553/cysteine 570, cysteine 573/cysteine 585, cysteine 575/cysteine 591, and cysteine 593/cysteine 602. Positions 573 to 602 (CNCNPMGSEPVGCRSDGTCVCKPGFGGPNC) constitute a Laminin EGF-like 8; truncated domain. Residues 603 to 1193 (EHGAFSCPAC…CYNTQALEQQ (591 aa)) are domain II and I. The stretch at 611-718 (ACYNQVKIQM…GSQYQNRVRD (108 aa)) forms a coiled coil. O-linked (Xyl...) (chondroitin sulfate) serine glycosylation is found at serine 803 and serine 805. Coiled-coil stretches lie at residues 811–1076 (AVVQ…AVQM) and 1117–1193 (EEGL…LEQQ). N-linked (GlcNAc...) asparagine glycans are attached at residues asparagine 942 and asparagine 1033.

In terms of assembly, laminin is a complex glycoprotein, consisting of three different polypeptide chains (alpha, beta, gamma), which are bound to each other by disulfide bonds into a cross-shaped molecule comprising one long and three short arms with globules at each end. Gamma-2 is a subunit of laminin-5 (laminin-332 or epiligrin/kalinin/nicein). Post-translationally, O-glycosylated; contains chondroitin sulfate (CS). CS attachment is on either Ser-803 or Ser-805. As to expression, the large variant is expressed only in specific epithelial cells of embryonic and neonatal tissues. In 17-week old embryo the small variant is found in cerebral cortex, lung, and distal tubes of kidney, but not in epithelia except for distal tubuli.

The protein resides in the secreted. It localises to the extracellular space. It is found in the extracellular matrix. The protein localises to the basement membrane. Functionally, binding to cells via a high affinity receptor, laminin is thought to mediate the attachment, migration and organization of cells into tissues during embryonic development by interacting with other extracellular matrix components. Ladsin exerts cell-scattering activity toward a wide variety of cells, including epithelial, endothelial, and fibroblastic cells. In Homo sapiens (Human), this protein is Laminin subunit gamma-2 (LAMC2).